We begin with the raw amino-acid sequence, 75 residues long: UPF0270 protein PFL_4336 (75 aa).

The protein belongs to the UPF0270 family.

The protein is UPF0270 protein PFL_4336 of Pseudomonas fluorescens (strain ATCC BAA-477 / NRRL B-23932 / Pf-5).